A 494-amino-acid polypeptide reads, in one-letter code: Cytochrome P450 2A7 (494 aa).

Residue cysteine 439 coordinates heme.

The protein belongs to the cytochrome P450 family. It depends on heme as a cofactor.

It localises to the endoplasmic reticulum membrane. The protein resides in the microsome membrane. It catalyses the reaction an organic molecule + reduced [NADPH--hemoprotein reductase] + O2 = an alcohol + oxidized [NADPH--hemoprotein reductase] + H2O + H(+). Functionally, cytochromes P450 are a group of heme-thiolate monooxygenases. In liver microsomes, this enzyme is involved in an NADPH-dependent electron transport pathway. It oxidizes a variety of structurally unrelated compounds, including steroids, fatty acids, and xenobiotics. In Homo sapiens (Human), this protein is Cytochrome P450 2A7 (CYP2A7).